Here is a 312-residue protein sequence, read N- to C-terminus: Acetyl-coenzyme A carboxylase carboxyl transferase subunit alpha (312 aa).

The CoA carboxyltransferase C-terminal domain maps to 36–286 (NLEKEISKTY…ADYVKKSLNE (251 aa)).

The protein belongs to the AccA family. As to quaternary structure, acetyl-CoA carboxylase is a heterohexamer composed of biotin carboxyl carrier protein (AccB), biotin carboxylase (AccC) and two subunits each of ACCase subunit alpha (AccA) and ACCase subunit beta (AccD).

Its subcellular location is the cytoplasm. The catalysed reaction is N(6)-carboxybiotinyl-L-lysyl-[protein] + acetyl-CoA = N(6)-biotinyl-L-lysyl-[protein] + malonyl-CoA. It functions in the pathway lipid metabolism; malonyl-CoA biosynthesis; malonyl-CoA from acetyl-CoA: step 1/1. In terms of biological role, component of the acetyl coenzyme A carboxylase (ACC) complex. First, biotin carboxylase catalyzes the carboxylation of biotin on its carrier protein (BCCP) and then the CO(2) group is transferred by the carboxyltransferase to acetyl-CoA to form malonyl-CoA. This is Acetyl-coenzyme A carboxylase carboxyl transferase subunit alpha from Campylobacter jejuni subsp. doylei (strain ATCC BAA-1458 / RM4099 / 269.97).